We begin with the raw amino-acid sequence, 368 residues long: Peptide chain release factor 2 (368 aa).

Position 250 is an N5-methylglutamine (Gln250).

Belongs to the prokaryotic/mitochondrial release factor family. Methylated by PrmC. Methylation increases the termination efficiency of RF2.

It is found in the cytoplasm. Functionally, peptide chain release factor 2 directs the termination of translation in response to the peptide chain termination codons UGA and UAA. The chain is Peptide chain release factor 2 from Chlamydia abortus (strain DSM 27085 / S26/3) (Chlamydophila abortus).